The following is a 152-amino-acid chain: Superoxide dismutase [Cu-Zn] (152 aa).

H45, H47, and H62 together coordinate Cu cation. Cysteines 56 and 145 form a disulfide. H62, H70, H79, and D82 together coordinate Zn(2+). Residue H119 coordinates Cu cation.

Belongs to the Cu-Zn superoxide dismutase family. Homodimer. It depends on Cu cation as a cofactor. Zn(2+) serves as cofactor.

It is found in the cytoplasm. It catalyses the reaction 2 superoxide + 2 H(+) = H2O2 + O2. Functionally, destroys radicals which are normally produced within the cells and which are toxic to biological systems. This Ipomoea batatas (Sweet potato) protein is Superoxide dismutase [Cu-Zn] (SODCC).